Consider the following 326-residue polypeptide: uncharacterized protein (326 aa).

Tyrosine 53 acts as the Proton donor in catalysis. NADP(+) is bound at residue 215-225 (SPLAGGLLGGK). Positions 242-305 (IEKHRLQLEK…AVEISLDKEI (64 aa)) form a coiled coil.

The protein belongs to the aldo/keto reductase family. Aldo/keto reductase 2 subfamily.

This is an uncharacterized protein from Bacillus subtilis (strain 168).